We begin with the raw amino-acid sequence, 345 residues long: rRNA 2'-O-methyltransferase fibrillarin (345 aa).

Positions 1 to 114 are disordered; that stretch reads MGKPGFSPRG…GFKGGKTVTI (114 aa). Residues 8–108 show a composition bias toward gly residues; the sequence is PRGGGGGGGG…RGGGAGGFKG (101 aa). Residues arginine 9, arginine 23, arginine 25, arginine 41, arginine 43, arginine 49, arginine 52, arginine 59, arginine 64, arginine 72, arginine 78, arginine 84, arginine 89, arginine 94, and arginine 99 each carry the asymmetric dimethylarginine modification. S-adenosyl-L-methionine contacts are provided by residues 198-199, 217-218, 242-243, and 262-265; these read TT, EF, DA, and DVAQ.

Belongs to the methyltransferase superfamily. Fibrillarin family. In terms of assembly, component of box C/D small nucleolar ribonucleoprotein (snoRNP) particles. It is associated with the U3, U8 and U13 small nuclear RNAs. Post-translationally, by homology to other fibrillarins, some or all of the N-terminal domain arginines are modified to asymmetric dimethylarginine (DMA).

It localises to the nucleus. It is found in the nucleolus. It carries out the reaction L-glutaminyl-[histone H2A] + S-adenosyl-L-methionine = N(5)-methyl-L-glutaminyl-[histone H2A] + S-adenosyl-L-homocysteine + H(+). In terms of biological role, S-adenosyl-L-methionine-dependent methyltransferase that has the ability to methylate both RNAs and proteins. Involved in pre-rRNA processing. Utilizes the methyl donor S-adenosyl-L-methionine to catalyze the site-specific 2'-hydroxyl methylation of ribose moieties in pre-ribosomal RNA. Site specificity is provided by a guide RNA that base pairs with the substrate. Methylation occurs at a characteristic distance from the sequence involved in base pairing with the guide RNA. Also acts as a protein methyltransferase by mediating methylation of 'Gln-105' of histone H2A (H2AQ105me), a modification that impairs binding of the FACT complex and is specifically present at 35S ribosomal DNA locus. The polypeptide is rRNA 2'-O-methyltransferase fibrillarin (Drosophila erecta (Fruit fly)).